A 199-amino-acid chain; its full sequence is Small ribosomal subunit protein uS4 (199 aa).

In terms of domain architecture, S4 RNA-binding spans 94–157 (SRLDNLVYRA…RKLKLVQEAL (64 aa)).

It belongs to the universal ribosomal protein uS4 family. In terms of assembly, part of the 30S ribosomal subunit. Contacts protein S5. The interaction surface between S4 and S5 is involved in control of translational fidelity.

In terms of biological role, one of the primary rRNA binding proteins, it binds directly to 16S rRNA where it nucleates assembly of the body of the 30S subunit. Functionally, with S5 and S12 plays an important role in translational accuracy. The polypeptide is Small ribosomal subunit protein uS4 (Mycoplasmopsis synoviae (strain 53) (Mycoplasma synoviae)).